Here is a 121-residue protein sequence, read N- to C-terminus: NADH-quinone oxidoreductase subunit A 1 (121 aa).

3 helical membrane passes run 11–31 (IAIFIGIALVIGLALLVAPFA), 65–85 (LVSILFIIFDLEVAFLFPWAV), and 90–110 (MGWFGFWSMMVFLLVLTVGFI).

The protein belongs to the complex I subunit 3 family. In terms of assembly, NDH-1 is composed of 14 different subunits. Subunits NuoA, H, J, K, L, M, N constitute the membrane sector of the complex.

Its subcellular location is the cell inner membrane. The enzyme catalyses a quinone + NADH + 5 H(+)(in) = a quinol + NAD(+) + 4 H(+)(out). Functionally, NDH-1 shuttles electrons from NADH, via FMN and iron-sulfur (Fe-S) centers, to quinones in the respiratory chain. The immediate electron acceptor for the enzyme in this species is believed to be ubiquinone. Couples the redox reaction to proton translocation (for every two electrons transferred, four hydrogen ions are translocated across the cytoplasmic membrane), and thus conserves the redox energy in a proton gradient. This chain is NADH-quinone oxidoreductase subunit A 1, found in Rhizobium meliloti (strain 1021) (Ensifer meliloti).